A 288-amino-acid polypeptide reads, in one-letter code: MFKDFFNRSSKKKKYVTVSDSKQSDVPAGIMTKCPKCKKIMYTKELAENLNVCFNCDHHIALTAHNRIEAISDEGTFTEFDKGMTSANPLDFPSYEEKIQKDQQKTGLNEAVVTGTAQLDGMTFGVAVMDARFRMGSMGSVLGEKICRIIEHCTENRLPFILFSASGGARMQEGIISLMQMGKTSVSLKRHADAGLLYISYITNPTTGGVSASFASVGDINISEPKALIGFAGRRVIEQTINEKLPDDFQTAEFLLEHGQLDKVVHRKEMKATLSNILKMHQEVKTNA.

The CoA carboxyltransferase N-terminal domain maps to 30–288 (IMTKCPKCKK…KMHQEVKTNA (259 aa)). Residues C34, C37, C53, and C56 each contribute to the Zn(2+) site. The C4-type zinc finger occupies 34 to 56 (CPKCKKIMYTKELAENLNVCFNC).

It belongs to the AccD/PCCB family. In terms of assembly, acetyl-CoA carboxylase is a heterohexamer composed of biotin carboxyl carrier protein (AccB), biotin carboxylase (AccC) and two subunits each of ACCase subunit alpha (AccA) and ACCase subunit beta (AccD). It depends on Zn(2+) as a cofactor.

The protein localises to the cytoplasm. It catalyses the reaction N(6)-carboxybiotinyl-L-lysyl-[protein] + acetyl-CoA = N(6)-biotinyl-L-lysyl-[protein] + malonyl-CoA. It functions in the pathway lipid metabolism; malonyl-CoA biosynthesis; malonyl-CoA from acetyl-CoA: step 1/1. Functionally, component of the acetyl coenzyme A carboxylase (ACC) complex. Biotin carboxylase (BC) catalyzes the carboxylation of biotin on its carrier protein (BCCP) and then the CO(2) group is transferred by the transcarboxylase to acetyl-CoA to form malonyl-CoA. The sequence is that of Acetyl-coenzyme A carboxylase carboxyl transferase subunit beta from Staphylococcus saprophyticus subsp. saprophyticus (strain ATCC 15305 / DSM 20229 / NCIMB 8711 / NCTC 7292 / S-41).